The sequence spans 171 residues: PIDD1 alternative open reading frame protein (171 aa).

2 disordered regions span residues 1-22 and 76-156; these read MSGL…RAGG and ILAS…LCPA. Residues 84-99 are compositionally biased toward low complexity; that stretch reads GPSAAGGHPGPAASEP.

In terms of assembly, interacts with calpain-2 catalytic subunit CAPN2. Cleaved in vitro following UV irradiation to induce caspase-mediated apoptosis and this cleavage is inhibited by a broad-spectrum caspase inhibitor.

The protein resides in the cytoplasm. It localises to the cytoskeleton. In Homo sapiens (Human), this protein is PIDD1 alternative open reading frame protein.